An 828-amino-acid polypeptide reads, in one-letter code: Protein SEY1 homolog (828 aa).

At 1 to 718 (MTEDVMNDDF…SSKNGISWKN (718 aa)) the chain is on the cytoplasmic side. A GB1/RHD3-type G domain is found at 44–284 (GFNYNVLSIL…VPSDGFFYYA (241 aa)). 54–61 (GCQSSGKS) serves as a coordination point for GTP. A helical membrane pass occupies residues 719–739 (IPPPFWILLLLCSWNELCSVL). Over 740–742 (RIV) the chain is Lumenal. A helical transmembrane segment spans residues 743 to 763 (FKVQVLIPLIILGFIVVQYFS). The Cytoplasmic portion of the chain corresponds to 764-828 (HLVFGTSADA…NDSGKKAEEN (65 aa)).

It belongs to the TRAFAC class dynamin-like GTPase superfamily. GB1/RHD3 GTPase family. RHD3 subfamily.

It is found in the endoplasmic reticulum membrane. In terms of biological role, probable GTP-binding protein that may be involved in cell development. The polypeptide is Protein SEY1 homolog (Babesia bovis).